Here is a 78-residue protein sequence, read N- to C-terminus: Acyl carrier protein (78 aa).

One can recognise a Carrier domain in the interval 2–77 (SDIAERVKKI…DAIKFLEKNS (76 aa)). Serine 37 bears the O-(pantetheine 4'-phosphoryl)serine mark.

It belongs to the acyl carrier protein (ACP) family. Post-translationally, 4'-phosphopantetheine is transferred from CoA to a specific serine of apo-ACP by AcpS. This modification is essential for activity because fatty acids are bound in thioester linkage to the sulfhydryl of the prosthetic group.

Its subcellular location is the cytoplasm. Its pathway is lipid metabolism; fatty acid biosynthesis. Its function is as follows. Carrier of the growing fatty acid chain in fatty acid biosynthesis. The sequence is that of Acyl carrier protein from Methylorubrum extorquens (strain CM4 / NCIMB 13688) (Methylobacterium extorquens).